Reading from the N-terminus, the 415-residue chain is Gamma-glutamyl phosphate reductase (415 aa).

This sequence belongs to the gamma-glutamyl phosphate reductase family.

Its subcellular location is the cytoplasm. It carries out the reaction L-glutamate 5-semialdehyde + phosphate + NADP(+) = L-glutamyl 5-phosphate + NADPH + H(+). The protein operates within amino-acid biosynthesis; L-proline biosynthesis; L-glutamate 5-semialdehyde from L-glutamate: step 2/2. Catalyzes the NADPH-dependent reduction of L-glutamate 5-phosphate into L-glutamate 5-semialdehyde and phosphate. The product spontaneously undergoes cyclization to form 1-pyrroline-5-carboxylate. This chain is Gamma-glutamyl phosphate reductase, found in Ligilactobacillus salivarius (strain UCC118) (Lactobacillus salivarius).